The following is a 400-amino-acid chain: Acetate kinase (400 aa).

Mg(2+) is bound at residue Asn-7. Lys-14 provides a ligand contact to ATP. Arg-90 is a binding site for substrate. The Proton donor/acceptor role is filled by Asp-147. ATP contacts are provided by residues 207-211 (HLGNG), 282-284 (DFR), and 331-335 (GIGEN). Position 384 (Glu-384) interacts with Mg(2+).

The protein belongs to the acetokinase family. Homodimer. Requires Mg(2+) as cofactor. Mn(2+) is required as a cofactor.

The protein localises to the cytoplasm. The enzyme catalyses acetate + ATP = acetyl phosphate + ADP. It participates in metabolic intermediate biosynthesis; acetyl-CoA biosynthesis; acetyl-CoA from acetate: step 1/2. In terms of biological role, catalyzes the formation of acetyl phosphate from acetate and ATP. Can also catalyze the reverse reaction. This Thermoanaerobacterium thermosaccharolyticum (strain ATCC 7956 / DSM 571 / NCIMB 9385 / NCA 3814 / NCTC 13789 / WDCM 00135 / 2032) (Clostridium thermosaccharolyticum) protein is Acetate kinase.